A 194-amino-acid polypeptide reads, in one-letter code: Cytochrome c oxidase assembly protein CtaG (194 aa).

Topologically, residues Met1–Gln12 are cytoplasmic. A helical; Signal-anchor for type II membrane protein membrane pass occupies residues Thr13 to Cys35. At Arg36 to Asn194 the chain is on the periplasmic side.

The protein belongs to the COX11/CtaG family.

The protein resides in the cell inner membrane. Its function is as follows. Exerts its effect at some terminal stage of cytochrome c oxidase synthesis, probably by being involved in the insertion of the copper B into subunit I. The protein is Cytochrome c oxidase assembly protein CtaG of Roseobacter denitrificans (strain ATCC 33942 / OCh 114) (Erythrobacter sp. (strain OCh 114)).